The chain runs to 100 residues: Small ribosomal subunit protein uS14 (100 aa).

Belongs to the universal ribosomal protein uS14 family. As to quaternary structure, part of the 30S ribosomal subunit. Contacts proteins S3 and S10.

Functionally, binds 16S rRNA, required for the assembly of 30S particles and may also be responsible for determining the conformation of the 16S rRNA at the A site. The protein is Small ribosomal subunit protein uS14 of Trichodesmium erythraeum (strain IMS101).